Reading from the N-terminus, the 140-residue chain is Organic hydroperoxide resistance protein-like (140 aa).

This sequence belongs to the OsmC/Ohr family.

In Staphylococcus aureus (strain USA300), this protein is Organic hydroperoxide resistance protein-like.